Reading from the N-terminus, the 366-residue chain is NADH-quinone oxidoreductase subunit D (366 aa).

This sequence belongs to the complex I 49 kDa subunit family. As to quaternary structure, NDH-1 is composed of 14 different subunits. Subunits NuoB, C, D, E, F, and G constitute the peripheral sector of the complex.

It is found in the cell membrane. It carries out the reaction a quinone + NADH + 5 H(+)(in) = a quinol + NAD(+) + 4 H(+)(out). NDH-1 shuttles electrons from NADH, via FMN and iron-sulfur (Fe-S) centers, to quinones in the respiratory chain. The immediate electron acceptor for the enzyme in this species is believed to be a menaquinone. Couples the redox reaction to proton translocation (for every two electrons transferred, four hydrogen ions are translocated across the cytoplasmic membrane), and thus conserves the redox energy in a proton gradient. This Bacillus cytotoxicus (strain DSM 22905 / CIP 110041 / 391-98 / NVH 391-98) protein is NADH-quinone oxidoreductase subunit D.